Consider the following 236-residue polypeptide: Transcriptional activator protein SolR (236 aa).

The HTH luxR-type domain maps to 169-234; it reads VPESNAVLTT…QAVVKAIATG (66 aa). Residues 193–212 constitute a DNA-binding region (H-T-H motif); it reads AYEIGQILRISERTVNFHVN.

Belongs to the autoinducer-regulated transcriptional regulatory protein family.

In Ralstonia solanacearum (Pseudomonas solanacearum), this protein is Transcriptional activator protein SolR (solR).